A 419-amino-acid chain; its full sequence is Serine hydroxymethyltransferase (419 aa).

Residues Leu121 and 125 to 127 (GHL) contribute to the (6S)-5,6,7,8-tetrahydrofolate site. Position 230 is an N6-(pyridoxal phosphate)lysine (Lys230). (6S)-5,6,7,8-tetrahydrofolate is bound at residue 355 to 357 (SPF).

It belongs to the SHMT family. Homodimer. The cofactor is pyridoxal 5'-phosphate.

The protein resides in the cytoplasm. It carries out the reaction (6R)-5,10-methylene-5,6,7,8-tetrahydrofolate + glycine + H2O = (6S)-5,6,7,8-tetrahydrofolate + L-serine. The protein operates within one-carbon metabolism; tetrahydrofolate interconversion. It functions in the pathway amino-acid biosynthesis; glycine biosynthesis; glycine from L-serine: step 1/1. Its function is as follows. Catalyzes the reversible interconversion of serine and glycine with tetrahydrofolate (THF) serving as the one-carbon carrier. This reaction serves as the major source of one-carbon groups required for the biosynthesis of purines, thymidylate, methionine, and other important biomolecules. Also exhibits THF-independent aldolase activity toward beta-hydroxyamino acids, producing glycine and aldehydes, via a retro-aldol mechanism. This is Serine hydroxymethyltransferase from Alkalilimnicola ehrlichii (strain ATCC BAA-1101 / DSM 17681 / MLHE-1).